A 513-amino-acid polypeptide reads, in one-letter code: ATP synthase subunit alpha (513 aa).

Residue 169 to 176 (GDRQTGKT) coordinates ATP.

The protein belongs to the ATPase alpha/beta chains family. In terms of assembly, F-type ATPases have 2 components, CF(1) - the catalytic core - and CF(0) - the membrane proton channel. CF(1) has five subunits: alpha(3), beta(3), gamma(1), delta(1), epsilon(1). CF(0) has three main subunits: a(1), b(2) and c(9-12). The alpha and beta chains form an alternating ring which encloses part of the gamma chain. CF(1) is attached to CF(0) by a central stalk formed by the gamma and epsilon chains, while a peripheral stalk is formed by the delta and b chains.

Its subcellular location is the cell inner membrane. The catalysed reaction is ATP + H2O + 4 H(+)(in) = ADP + phosphate + 5 H(+)(out). Produces ATP from ADP in the presence of a proton gradient across the membrane. The alpha chain is a regulatory subunit. This Polynucleobacter necessarius subsp. necessarius (strain STIR1) protein is ATP synthase subunit alpha.